The chain runs to 483 residues: Glutamyl-tRNA(Gln) amidotransferase subunit A (483 aa).

Catalysis depends on charge relay system residues Lys75 and Ser150. Residue Ser174 is the Acyl-ester intermediate of the active site.

Belongs to the amidase family. GatA subfamily. As to quaternary structure, heterotrimer of A, B and C subunits.

It catalyses the reaction L-glutamyl-tRNA(Gln) + L-glutamine + ATP + H2O = L-glutaminyl-tRNA(Gln) + L-glutamate + ADP + phosphate + H(+). Allows the formation of correctly charged Gln-tRNA(Gln) through the transamidation of misacylated Glu-tRNA(Gln) in organisms which lack glutaminyl-tRNA synthetase. The reaction takes place in the presence of glutamine and ATP through an activated gamma-phospho-Glu-tRNA(Gln). This Microcystis aeruginosa (strain NIES-843 / IAM M-2473) protein is Glutamyl-tRNA(Gln) amidotransferase subunit A.